A 247-amino-acid polypeptide reads, in one-letter code: MSDPLILIPARLAATRLPDKPLAEICGEPMIVHVWRRAIESGLGPVVVCTDTPAIVAAVEAVGGLGVLTRPDHPSGSDRLAEALAIIDPEGRHDVVVNVQGDLPTIDPAVIAASVTPLADRAVDIATLCAVITRPEERTEPSVVKVVGSPVSPTRLRALYFTRATAPWGEGPLHHHIGLYAYRRRALERFVALGPSPLEQREKLEQLRALEAGMRIDATIVDDVPLGVDTPHDLDRARAVMAARRLN.

Belongs to the KdsB family.

It is found in the cytoplasm. It carries out the reaction 3-deoxy-alpha-D-manno-oct-2-ulosonate + CTP = CMP-3-deoxy-beta-D-manno-octulosonate + diphosphate. It participates in nucleotide-sugar biosynthesis; CMP-3-deoxy-D-manno-octulosonate biosynthesis; CMP-3-deoxy-D-manno-octulosonate from 3-deoxy-D-manno-octulosonate and CTP: step 1/1. Its pathway is bacterial outer membrane biogenesis; lipopolysaccharide biosynthesis. Activates KDO (a required 8-carbon sugar) for incorporation into bacterial lipopolysaccharide in Gram-negative bacteria. This is 3-deoxy-manno-octulosonate cytidylyltransferase from Methylobacterium sp. (strain 4-46).